The following is a 65-amino-acid chain: Large ribosomal subunit protein bL35 (65 aa).

Positions 1-15 are enriched in basic residues; that stretch reads MPKMKTKKSASKRFT. 2 disordered regions span residues 1–26 and 38–65; these read MPKMKTKKSASKRFTARPGGTIKRGQ and TKNKRHLRGTEGVHETNLKSVRAMMPYA. Residues 45-54 are compositionally biased toward basic and acidic residues; sequence RGTEGVHETN.

It belongs to the bacterial ribosomal protein bL35 family.

The sequence is that of Large ribosomal subunit protein bL35 from Ralstonia pickettii (strain 12J).